The primary structure comprises 455 residues: MSLVPKKSIDDAVVKGKKVLIRVDFNVPVKNGEITNDFRIRSALPTIQKVLKEGGSCILMSHLGRPKGAKMSDPKPAKSVRGYEEAATLRPVAARLSELLGQKVEFAPDCLDAASYAAKLKGGDVLLLENVRFYAEEGSKKEEERDAMAKVLAAYGDVYVSDAFGTAHRDSADMTGIPKVLGAGYAGYLMEKEINYFAQVLNNPPRPLVAIVGGAKVSDKIQLLDNMLGRINYLVIGGAMAYTFQKAQGHAIGISMCEEDKLDLAKSLLKKAQERNVEVLLPVDHVCNKEFQGVDAPLVTKDVEIPEGYMALDIGPKTIKIYEDVIAKCKSTIWNGPMGVFEMPCYSKGTFAVAKAMGNGTQKNGLMSIIGGGDTASAAELSGEAKNMSHVSTGGGASLELLEGKSLPGVTVLTNKDAKAPAAAAAAGGDCPCGSGCAAVPAAATATVSMVLASP.

Positions 23, 24, 25, 26, 39, 61, 62, 64, 65, 132, 168, and 169 each coordinate (2R)-3-phosphoglycerate. Residues glycine 214 and alanine 215 each coordinate ADP. A CDP-binding site is contributed by glycine 214. 2 residues coordinate AMP: alanine 215 and lysine 216. Alanine 215 contacts ATP. Alanine 215 contacts Mg(2+). Lysine 216 is a binding site for (2R)-3-phosphoglycerate. Residue aspartate 219 coordinates CDP. Position 219 (aspartate 219) interacts with Mg(2+). ADP-binding residues include lysine 220 and glycine 238. Residue lysine 220 participates in AMP binding. ATP is bound at residue lysine 220. Glycine 238 lines the CDP pocket. Positions 239 and 311 each coordinate AMP. ATP contacts are provided by alanine 239 and alanine 311. ADP contacts are provided by alanine 311 and asparagine 335. CDP contacts are provided by glycine 336 and phenylalanine 341. 4 residues coordinate ADP: phenylalanine 341, glutamate 342, aspartate 374, and threonine 375. Glutamate 342 lines the AMP pocket. ATP-binding residues include glutamate 342, aspartate 374, and threonine 375. Aspartate 374 contacts Mg(2+). Residues 417–455 are topogenic signal; the sequence is DAKAPAAAAAAGGDCPCGSGCAAVPAAATATVSMVLASP.

This sequence belongs to the phosphoglycerate kinase family. As to quaternary structure, monomer. Mg(2+) is required as a cofactor.

The protein resides in the glycosome. It catalyses the reaction (2R)-3-phosphoglycerate + ATP = (2R)-3-phospho-glyceroyl phosphate + ADP. It functions in the pathway carbohydrate degradation; glycolysis; pyruvate from D-glyceraldehyde 3-phosphate: step 2/5. This Crithidia fasciculata protein is Phosphoglycerate kinase, glycosomal (PGKC).